We begin with the raw amino-acid sequence, 1140 residues long: Receptor-type guanylate cyclase gcy-3 (1140 aa).

Residues 1 to 21 form the signal peptide; it reads MKNVFQLLIPLFFHLFSLVSL. Over 22–495 the chain is Extracellular; the sequence is QNIPVSTGTT…CPLPFWEQYG (474 aa). N-linked (GlcNAc...) asparagine glycans are attached at residues N220, N301, N349, N385, N418, N441, and N459. Residues 496–516 form a helical membrane-spanning segment; that stretch reads ILIFVGAGVFLIMITTNLICF. Residues 517–1140 are Cytoplasmic-facing; sequence LFMIKNRREE…RQYKMDTLKI (624 aa). One can recognise a Protein kinase domain in the interval 538 to 826; it reads FVKLRELERK…NICEQLRDLM (289 aa). ATP contacts are provided by residues 544 to 552 and K582; that span reads LERKSKGTS. The Guanylate cyclase domain maps to 897-1027; the sequence is TVFFSDVVKF…DTVNTASRME (131 aa). Residues 1083-1140 are disordered; sequence PSISNRSTPPVTQERFTVRAPDTPEARSVSSHGSRPSSNHNNNNDPLYRQYKMDTLKI. The span at 1084-1097 shows a compositional bias: polar residues; it reads SISNRSTPPVTQER. Over residues 1109–1126 the composition is skewed to low complexity; that stretch reads RSVSSHGSRPSSNHNNNN.

It belongs to the adenylyl cyclase class-4/guanylyl cyclase family. Expressed asymmetrically in ASE right (ASER) sensory neuron and bilaterally in ASI sensory neurons. Expressed in PVT interneuron.

The protein localises to the cell membrane. The enzyme catalyses GTP = 3',5'-cyclic GMP + diphosphate. In terms of biological role, guanylate cyclase involved in the production of the second messenger cGMP. The sequence is that of Receptor-type guanylate cyclase gcy-3 from Caenorhabditis elegans.